A 474-amino-acid chain; its full sequence is 3-isopropylmalate dehydratase large subunit (474 aa).

3 residues coordinate [4Fe-4S] cluster: Cys355, Cys415, and Cys418.

Belongs to the aconitase/IPM isomerase family. LeuC type 1 subfamily. In terms of assembly, heterodimer of LeuC and LeuD. [4Fe-4S] cluster serves as cofactor.

It catalyses the reaction (2R,3S)-3-isopropylmalate = (2S)-2-isopropylmalate. The protein operates within amino-acid biosynthesis; L-leucine biosynthesis; L-leucine from 3-methyl-2-oxobutanoate: step 2/4. Its function is as follows. Catalyzes the isomerization between 2-isopropylmalate and 3-isopropylmalate, via the formation of 2-isopropylmaleate. In Shewanella putrefaciens (strain CN-32 / ATCC BAA-453), this protein is 3-isopropylmalate dehydratase large subunit.